The sequence spans 422 residues: Metallocarboxypeptidase A (422 aa).

The first 17 residues, methionine 1–alanine 17, serve as a signal peptide directing secretion. A propeptide spans alanine 18–proline 112 (activation peptide). The 301-residue stretch at serine 119–valine 419 folds into the Peptidase M14 domain. Zn(2+) contacts are provided by histidine 179 and glutamate 182. Substrate contacts are provided by residues histidine 179–glutamate 182, arginine 237, and asparagine 254–arginine 255. Residues cysteine 248 and cysteine 271 are joined by a disulfide bond. Histidine 309 contacts Zn(2+). Residue serine 310–tyrosine 311 participates in substrate binding. Catalysis depends on glutamate 385, which acts as the Proton donor/acceptor.

The protein belongs to the peptidase M14 family. It depends on Zn(2+) as a cofactor.

It is found in the secreted. Functionally, extracellular metalloprotease that contributes to pathogenicity. This is Metallocarboxypeptidase A (MCPA) from Arthroderma otae (strain ATCC MYA-4605 / CBS 113480) (Microsporum canis).